Here is a 231-residue protein sequence, read N- to C-terminus: AA9 family lytic polysaccharide monooxygenase F (231 aa).

The signal sequence occupies residues 1–17; that stretch reads MLPSISLLLAAALGTSA. Positions 18, 50, and 89 each coordinate Cu(2+). Residue D50 participates in O2 binding. Disulfide bonds link C59-C177 and C147-C231. Positions 163 and 172 each coordinate O2. Y174 is a Cu(2+) binding site.

Belongs to the polysaccharide monooxygenase AA9 family. The cofactor is Cu(2+).

Its subcellular location is the secreted. The catalysed reaction is [(1-&gt;4)-beta-D-glucosyl]n+m + reduced acceptor + O2 = 4-dehydro-beta-D-glucosyl-[(1-&gt;4)-beta-D-glucosyl]n-1 + [(1-&gt;4)-beta-D-glucosyl]m + acceptor + H2O.. In terms of biological role, lytic polysaccharide monooxygenase (LPMO) that depolymerizes crystalline and amorphous polysaccharides via the oxidation of scissile alpha- or beta-(1-4)-glycosidic bonds, yielding C1 oxidation products. Catalysis by LPMOs requires the reduction of the active-site copper from Cu(II) to Cu(I) by a reducing agent and H(2)O(2) or O(2) as a cosubstrate. In Neurospora crassa (strain ATCC 24698 / 74-OR23-1A / CBS 708.71 / DSM 1257 / FGSC 987), this protein is AA9 family lytic polysaccharide monooxygenase F (gh61-6).